The following is a 588-amino-acid chain: Probable urocanate hydratase (588 aa).

The segment covering 1–15 has biased composition (low complexity); sequence MDTPSAAAETSEPSA. The interval 1–22 is disordered; it reads MDTPSAAAETSEPSAQWQAYRG. Residues 62–63, Q140, 188–190, E208, R213, 254–255, 275–279, and Y334 each bind NAD(+); these read GG, GMG, NA, and QTSAH. C431 is a catalytic residue. G520 lines the NAD(+) pocket.

It belongs to the urocanase family. It depends on NAD(+) as a cofactor.

It is found in the cytoplasm. The catalysed reaction is 4-imidazolone-5-propanoate = trans-urocanate + H2O. It participates in amino-acid degradation; L-histidine degradation into L-glutamate; N-formimidoyl-L-glutamate from L-histidine: step 2/3. Functionally, catalyzes the conversion of urocanate to 4-imidazolone-5-propionate. The sequence is that of Probable urocanate hydratase from Halobacterium salinarum (strain ATCC 29341 / DSM 671 / R1).